Consider the following 343-residue polypeptide: Holliday junction branch migration complex subunit RuvB (343 aa).

The interval 1–186 (MTEEFDIRQE…FGINLHLEYY (186 aa)) is large ATPase domain (RuvB-L). Residues Leu25, Arg26, Gly67, Lys70, Thr71, Thr72, 133 to 135 (EDY), Arg176, Tyr186, and Arg223 each bind ATP. Thr71 is a Mg(2+) binding site. The segment at 187–257 (DVHTITGIVE…IACYALEALN (71 aa)) is small ATPAse domain (RuvB-S). Residues 260–343 (RYGLDNVDHK…PRPHRPSLFD (84 aa)) form a head domain (RuvB-H) region. Residues Arg315 and Arg320 each contribute to the DNA site.

The protein belongs to the RuvB family. In terms of assembly, homohexamer. Forms an RuvA(8)-RuvB(12)-Holliday junction (HJ) complex. HJ DNA is sandwiched between 2 RuvA tetramers; dsDNA enters through RuvA and exits via RuvB. An RuvB hexamer assembles on each DNA strand where it exits the tetramer. Each RuvB hexamer is contacted by two RuvA subunits (via domain III) on 2 adjacent RuvB subunits; this complex drives branch migration. In the full resolvosome a probable DNA-RuvA(4)-RuvB(12)-RuvC(2) complex forms which resolves the HJ.

Its subcellular location is the cytoplasm. It catalyses the reaction ATP + H2O = ADP + phosphate + H(+). Its function is as follows. The RuvA-RuvB-RuvC complex processes Holliday junction (HJ) DNA during genetic recombination and DNA repair, while the RuvA-RuvB complex plays an important role in the rescue of blocked DNA replication forks via replication fork reversal (RFR). RuvA specifically binds to HJ cruciform DNA, conferring on it an open structure. The RuvB hexamer acts as an ATP-dependent pump, pulling dsDNA into and through the RuvAB complex. RuvB forms 2 homohexamers on either side of HJ DNA bound by 1 or 2 RuvA tetramers; 4 subunits per hexamer contact DNA at a time. Coordinated motions by a converter formed by DNA-disengaged RuvB subunits stimulates ATP hydrolysis and nucleotide exchange. Immobilization of the converter enables RuvB to convert the ATP-contained energy into a lever motion, pulling 2 nucleotides of DNA out of the RuvA tetramer per ATP hydrolyzed, thus driving DNA branch migration. The RuvB motors rotate together with the DNA substrate, which together with the progressing nucleotide cycle form the mechanistic basis for DNA recombination by continuous HJ branch migration. Branch migration allows RuvC to scan DNA until it finds its consensus sequence, where it cleaves and resolves cruciform DNA. In Porphyromonas gingivalis (strain ATCC BAA-308 / W83), this protein is Holliday junction branch migration complex subunit RuvB.